Here is a 92-residue protein sequence, read N- to C-terminus: MKTLLLTLVVVTIVCLDLGYTRRCFITPDVRSERCPPGQEVCYTKTWCDGFCSSRGKRVDLGCAATCPTPKKKGIDIICCSKDNCNTFPKWP.

The N-terminal stretch at 1-21 is a signal peptide; it reads MKTLLLTLVVVTIVCLDLGYT. 5 cysteine pairs are disulfide-bonded: cysteine 24-cysteine 42, cysteine 35-cysteine 63, cysteine 48-cysteine 52, cysteine 67-cysteine 79, and cysteine 80-cysteine 85.

This sequence belongs to the three-finger toxin family. Long-chain subfamily. Type II alpha-neurotoxin sub-subfamily. Expressed by the venom gland.

It localises to the secreted. In terms of biological role, binds with high affinity to muscular (alpha-1/CHRNA1) and neuronal (alpha-7/CHRNA7) nicotinic acetylcholine receptor (nAChR) and inhibits acetylcholine from binding to the receptor, thereby impairing neuromuscular and neuronal transmission. The sequence is that of Long neurotoxin 2 from Oxyuranus microlepidotus (Inland taipan).